The sequence spans 243 residues: Adapter protein MecA (243 aa).

Residues 119–140 (NQVEDGQGIAHNPTKDTNDLDP) are disordered.

It belongs to the MecA family. As to quaternary structure, homodimer.

Functionally, enables the recognition and targeting of unfolded and aggregated proteins to the ClpC protease or to other proteins involved in proteolysis. This Lactiplantibacillus plantarum (strain ATCC BAA-793 / NCIMB 8826 / WCFS1) (Lactobacillus plantarum) protein is Adapter protein MecA.